A 472-amino-acid chain; its full sequence is FAD-linked oxidoreductase azaL (472 aa).

An N-terminal signal peptide occupies residues 1–18; it reads MFRTILLCSLGLTTLSSA. Residues Asn-22, Asn-44, Asn-102, Asn-123, Asn-227, Asn-246, Asn-273, Asn-305, Asn-318, Asn-390, and Asn-415 are each glycosylated (N-linked (GlcNAc...) asparagine). The FAD-binding PCMH-type domain occupies 54–228; that stretch reads TTYDAPTYIG…TSATYKIYNA (175 aa).

It belongs to the oxygen-dependent FAD-linked oxidoreductase family.

It functions in the pathway secondary metabolite biosynthesis. FAD-linked oxidoreductase; part of the gene cluster that mediates the biosynthesis of azaphilones, a class of fungal metabolites characterized by a highly oxygenated pyrano-quinone bicyclic core and exhibiting a broad range of bioactivities. In the first step, the non-reducing polyketide synthase azaA forms the hexaketide precursor from successive condensations of five malonyl-CoA units, presumably with a simple acetyl-CoA starter unit. The reactive polyketide chain then undergoes a PT-mediated C2-C7 cyclization to afford the aromatic ring and is eventually released as an aldehyde through the R-domain. The putative ketoreductase azaE is proposed to catalyze the reduction of the terminal ketone resulting in the early culture product FK17-P2a. The monooxygenase azaH was demonstrated to be the only enzyme required to convert FK17-P2a to azanigerone E. AzaH first hydroxylates the benzaldehyde intermediate FK17-P2a at C4, which triggers the formation of the pyran-ring to afford azanigerone E. In parallel, the 2,4-dimethylhexanoyl chain is synthesized by the HR-PKS azaB and is proposed to be transferred to the C4-hydroxyl of azanigerone E by the acyltransferase azaD directly from the ACP domain of azaB. Alternatively, the 2,4-dimethyl-hexanoyl chain may be offloaded from the HR-PKS as a carboxylic acid and converted to an acyl-CoA by azaF. The resulting acyl-CoA molecule could then be taken up as a substrate by AzaD to form azanigerone B. To yield the carboxylic acid substituent in azanigerone A, the hydroxypropyl side chain of azanigerone B would need to undergo a C-C oxidative cleavage catalyzed by cytochrome P450 AzaI. AzaI is proposed to act on a vicinal diol that leads to a C-C bond scission either through an alkoxyradical intermediate or a peroxy complex. In the biosynthesis of azanigerone A, azanigerone B first undergoes hydroxylation at C10, possibly catalyzed by one of the two FAD-dependent monooxygenases encoded in the cluster, azaG or azaL, resulting in the vicinal diol azanigerone C. Oxidative cleavage of azanigerone C by azaI would yield the corresponding aldehyde derivative of azanigerone A. Finally, the dehydrogenase azaJ is proposed to convert the aldehyde functional group into the carboxylic acid, completing the conversion from azanigerone B to azanigerone A. Alternatively, the oxidation of aldehyde to carboxylic acid may be catalyzed by the same P450 enzyme azaI via consecutive oxidation or by endogenous alcohol dehydrogenase. This chain is FAD-linked oxidoreductase azaL, found in Aspergillus niger (strain ATCC 1015 / CBS 113.46 / FGSC A1144 / LSHB Ac4 / NCTC 3858a / NRRL 328 / USDA 3528.7).